Here is a 346-residue protein sequence, read N- to C-terminus: Parapinopsin (346 aa).

Over 1–29 (MASIILINFSETDTLHLGSVNDHIMPRIG) the chain is Extracellular. N-linked (GlcNAc...) asparagine glycosylation is present at Asn-8. Residues 30-54 (YTILSIIMALSSTFGIILNMVVIIV) traverse the membrane as a helical segment. The Cytoplasmic portion of the chain corresponds to 55 to 66 (TVRYKQLRQPLN). A helical membrane pass occupies residues 67–91 (YALVNLAVADLGCPVFGGLLTAVTN). Over 92–106 (AMGYFSLGRVGCVLE) the chain is Extracellular. Cys-103 and Cys-180 form a disulfide bridge. A helical transmembrane segment spans residues 107–126 (GFAVAFFGIAGLCSVAVIAV). Topologically, residues 127–145 (DRYMVVCRPLGAVMFQTKH) are cytoplasmic. A helical membrane pass occupies residues 146–169 (ALAGVVFSWVWSFIWNTPPLFGWG). The Extracellular portion of the chain corresponds to 170-193 (SYQLEGVMTSCAPNWYRRDPVNVS). The N-linked (GlcNAc...) asparagine glycan is linked to Asn-191. Residues 194 to 221 (YILCYFMLCFALPFATIIFSYMHLLHTL) form a helical membrane-spanning segment. Over 222–244 (WQVAKLQVADSGSTAKVEVQVAR) the chain is Cytoplasmic. Residues 245–268 (MVVIMVMAFLLTWLPYAAFALTVI) form a helical membrane-spanning segment. The Extracellular portion of the chain corresponds to 269–276 (IDSNIYIN). Residues 277 to 301 (PVIGTIPAYLAKSSTVFNPIIYIFM) traverse the membrane as a helical segment. The residue at position 288 (Lys-288) is an N6-(retinylidene)lysine. Residues 302 to 346 (NRQFRDYALPCLLCGKNPWAAKEGRDSDTNTLTTTVSKNTSVSPL) lie on the Cytoplasmic side of the membrane. The S-palmitoyl cysteine moiety is linked to residue Cys-315. Residues 325–346 (GRDSDTNTLTTTVSKNTSVSPL) form a disordered region. A compositionally biased stretch (low complexity) spans 330–346 (TNTLTTTVSKNTSVSPL).

This sequence belongs to the G-protein coupled receptor 1 family. Opsin subfamily. Post-translationally, phosphorylated on some or all of the serine and threonine residues present in the C-terminal region. In terms of tissue distribution, parapineal organ.

The protein resides in the membrane. The sequence is that of Parapinopsin from Ictalurus punctatus (Channel catfish).